Consider the following 418-residue polypeptide: Probable serine hydroxymethyltransferase (418 aa).

Residues L118 and 122–124 (GHL) contribute to the (6S)-5,6,7,8-tetrahydrofolate site. An N6-(pyridoxal phosphate)lysine modification is found at K226. 351–353 (SPF) is a binding site for (6S)-5,6,7,8-tetrahydrofolate.

Belongs to the SHMT family. As to quaternary structure, homodimer. It depends on pyridoxal 5'-phosphate as a cofactor.

It is found in the cytoplasm. The enzyme catalyses (6R)-5,10-methylene-5,6,7,8-tetrahydrofolate + glycine + H2O = (6S)-5,6,7,8-tetrahydrofolate + L-serine. It participates in one-carbon metabolism; tetrahydrofolate interconversion. Catalyzes the reversible interconversion of serine and glycine with tetrahydrofolate (THF) serving as the one-carbon carrier. This reaction serves as the major source of one-carbon groups required for the biosynthesis of purines, thymidylate, methionine, and other important biomolecules. The polypeptide is Probable serine hydroxymethyltransferase (Mesomycoplasma hyopneumoniae (strain 232) (Mycoplasma hyopneumoniae)).